A 314-amino-acid chain; its full sequence is Mitochondrial 2-oxoglutarate/malate carrier protein (314 aa).

Alanine 2 carries the post-translational modification N-acetylalanine. Position 6 is a phosphoserine (serine 6). Solcar repeat units follow at residues 23–108 (VKFL…LFER), 117–208 (PGFL…SKQF), and 217–306 (DNIL…MNKA). The helical transmembrane segment at 24-42 (KFLFGGLAGMGATVFVQPL) threads the bilayer. Lysine 57 carries the N6-succinyllysine modification. A helical membrane pass occupies residues 83 to 101 (GLSAGLLRQATYTTTRLGI). Position 102 is a phosphotyrosine (tyrosine 102). 3 helical membrane-spanning segments follow: residues 119 to 140 (FLLKAVIGMTAGATGAFVGTPA), 183 to 202 (GCIPTMARAVVVNAAQLASY), and 222 to 240 (HFCASMISGLVTTAASMPV). Lysine 256 is subject to N6-acetyllysine. The chain crosses the membrane as a helical span at residues 281–300 (GFTPYYARLGPHTVLTFIFL).

This sequence belongs to the mitochondrial carrier (TC 2.A.29) family. In terms of assembly, interacts with SMIM26. In terms of processing, the N-terminus is blocked. Heart, liver and brain.

It is found in the mitochondrion inner membrane. It carries out the reaction (S)-malate(in) + 2-oxoglutarate(out) = (S)-malate(out) + 2-oxoglutarate(in). It catalyses the reaction malonate(in) + 2-oxoglutarate(out) = malonate(out) + 2-oxoglutarate(in). The enzyme catalyses succinate(in) + 2-oxoglutarate(out) = succinate(out) + 2-oxoglutarate(in). The catalysed reaction is maleate(in) + 2-oxoglutarate(out) = maleate(out) + 2-oxoglutarate(in). It carries out the reaction oxaloacetate(in) + 2-oxoglutarate(out) = oxaloacetate(out) + 2-oxoglutarate(in). In terms of biological role, catalyzes the transport of 2-oxoglutarate (alpha-oxoglutarate) across the inner mitochondrial membrane in an electroneutral exchange for malate. Can also exchange 2-oxoglutarate for other dicarboxylic acids such as malonate, succinate, maleate and oxaloacetate, although with lower affinity. Contributes to several metabolic processes, including the malate-aspartate shuttle, the oxoglutarate/isocitrate shuttle, in gluconeogenesis from lactate, and in nitrogen metabolism. Maintains mitochondrial fusion and fission events, and the organization and morphology of cristae. Involved in the regulation of apoptosis. Helps protect from cytotoxic-induced apoptosis by modulating glutathione levels in mitochondria. This is Mitochondrial 2-oxoglutarate/malate carrier protein (SLC25A11) from Bos taurus (Bovine).